Here is a 514-residue protein sequence, read N- to C-terminus: 2,3-bisphosphoglycerate-independent phosphoglycerate mutase (514 aa).

Residues Asp-14 and Ser-64 each contribute to the Mn(2+) site. The active-site Phosphoserine intermediate is the Ser-64. Residues His-125, 155–156, Arg-187, Arg-193, 263–266, and Lys-336 each bind substrate; these read RD and RADR. Mn(2+) contacts are provided by Asp-403, His-407, Asp-444, His-445, and His-463.

Belongs to the BPG-independent phosphoglycerate mutase family. In terms of assembly, monomer. Mn(2+) is required as a cofactor.

It catalyses the reaction (2R)-2-phosphoglycerate = (2R)-3-phosphoglycerate. The protein operates within carbohydrate degradation; glycolysis; pyruvate from D-glyceraldehyde 3-phosphate: step 3/5. Insensitive to vanadate. Its function is as follows. Catalyzes the interconversion of 2-phosphoglycerate (2-PGA) and 3-phosphoglycerate (3-PGA). The chain is 2,3-bisphosphoglycerate-independent phosphoglycerate mutase from Escherichia coli (strain K12).